The chain runs to 471 residues: Serine/threonine-protein kinase sid1 (471 aa).

In terms of domain architecture, Protein kinase spans 9 to 260 (YTLLRKLGSG…AKELLQHPFI (252 aa)). Residues 15–23 (LGSGSFGVV) and Lys38 contribute to the ATP site. Asp129 acts as the Proton acceptor in catalysis.

It belongs to the protein kinase superfamily. STE Ser/Thr protein kinase family. STE20 subfamily. In terms of assembly, interacts with cdc14.

It localises to the cytoplasm. Its subcellular location is the cytoskeleton. The protein localises to the microtubule organizing center. It is found in the spindle pole body. The enzyme catalyses L-seryl-[protein] + ATP = O-phospho-L-seryl-[protein] + ADP + H(+). The catalysed reaction is L-threonyl-[protein] + ATP = O-phospho-L-threonyl-[protein] + ADP + H(+). Its function is as follows. Has a role in the septation initiation network (SIN) required for cytokinesis. In Schizosaccharomyces pombe (strain 972 / ATCC 24843) (Fission yeast), this protein is Serine/threonine-protein kinase sid1 (sid1).